Here is a 575-residue protein sequence, read N- to C-terminus: Sodium/hydrogen exchanger 8 (575 aa).

A run of 11 helical transmembrane segments spans residues 54 to 74, 78 to 98, 117 to 137, 150 to 170, 185 to 205, 255 to 275, 305 to 325, 348 to 368, 373 to 393, 411 to 431, and 445 to 465; these read MTIFFSLLVLAICIILVHLLI, LHFLPESVAVVSLGILMGAVI, PNMFFLLLLPPIIFESGYSLH, LFAVFGTAISAFVVGGGIYFL, FAFGSLISAVDPVATIAIFNA, LGYFLKMFFGSAALGTLTGLI, GLAEGISLSGIMAILFSGIVM, VAFLCETCVFAFLGLSIFSFP, ISFVIWCIVLVLFGRAVNIFP, MFIMWFSGLRGAIPYALSLHL, and TTIIIVLFTILLLGGSTMPLI. At threonine 504 the chain carries Phosphothreonine. Phosphoserine is present on residues serine 565 and serine 567.

It belongs to the monovalent cation:proton antiporter 1 (CPA1) transporter (TC 2.A.36) family. As to expression, intestine and kidneys.

The protein resides in the golgi apparatus membrane. It localises to the golgi apparatus. Its subcellular location is the trans-Golgi network membrane. The protein localises to the endosome. It is found in the multivesicular body membrane. The protein resides in the apical cell membrane. It localises to the cytoplasmic vesicle. Its subcellular location is the secretory vesicle. The protein localises to the acrosome. It catalyses the reaction Na(+)(in) + H(+)(out) = Na(+)(out) + H(+)(in). Its activity is regulated as follows. Expression and activity are regulated by acid media by increasing the rate of trafficking to the apical membrane. Inhibited by HOE694 and S3226. In terms of biological role, na(+)/H(+) antiporter. Mediates the electoneutral exchange of intracellular H(+) ions for extracellular Na(+) in 1:1 stoichiometry. Acts as an Na(+)/H(+) exchanger in the trans-Golgi. Contributes to the regulation of pH regulation of Golgi apparatus, and consequently, in protein trafficking and endosomal morphology. In germ cells, plays a crucial role in acrosome biogenesis and sperm development, probably by playing a role in the fusion of the Golgi-derived vesicles that form the acrosomal cap. Can also be active at the cell surface of specialized cells. In the small intestine, at the cell membrane, plays a major physiological role in transepithelial absorption of Na(+) and regulates intracellular pH homeostasis of intestinal epithelial cells. Acts as an important regulator of mucosal integrity in the intestine and in the stomach, could mediate the pH fluctuation necessary for mucin exocytosis or assist membrane trafficking of other proteins. Plays a role in photoreceptor survival and in the maintenance of intracellular pH homeostasis in retinal pigment epithelium (RPE cells). The protein is Sodium/hydrogen exchanger 8 (Slc9a8) of Rattus norvegicus (Rat).